A 407-amino-acid polypeptide reads, in one-letter code: MDYLNDSMFNNMTYNITSTPLPDAPRFDNVYVSKLCVLGTVFVISFFGNTLVIIQIFRIRGSRSTIQSLILNLAIADLMVSFFNILMDIIWSATVEWLAGNTMCKIMKYLTVFGLHLSTYITVSIALDRCFAILSPMSRSKAPLRVRIMITMAWVLSAIFSIPQAVIFQEQRKMFRQGMFHQCRDSYNALWQKQLYSASSLILLFVIPLIIMVTSYLLILKTIVKTSRQFHDTPISPTSMSCYSVNHGQIRTHLFERARKRSSRMSAVIVAAFILCWTPYYIIFLGFAFFQWDNSRTVIYFFTLGTSNCMLNPLIYGAFTIYKVHRGRSGSANSPSGTRLMIMVNKRGRSTTTTTNRMSGSGRRQLTTGQTITQCASLTNPHQPVRPSPGINSTTSPNGKMPTKPPG.

Over 1-36 (MDYLNDSMFNNMTYNITSTPLPDAPRFDNVYVSKLC) the chain is Extracellular. N-linked (GlcNAc...) asparagine glycans are attached at residues Asn-5, Asn-11, and Asn-15. A helical membrane pass occupies residues 37–57 (VLGTVFVISFFGNTLVIIQIF). The Cytoplasmic segment spans residues 58–69 (RIRGSRSTIQSL). The chain crosses the membrane as a helical span at residues 70–90 (ILNLAIADLMVSFFNILMDII). The Extracellular portion of the chain corresponds to 91-105 (WSATVEWLAGNTMCK). A disulfide bridge links Cys-104 with Cys-183. A helical transmembrane segment spans residues 106 to 126 (IMKYLTVFGLHLSTYITVSIA). At 127–147 (LDRCFAILSPMSRSKAPLRVR) the chain is on the cytoplasmic side. The helical transmembrane segment at 148–168 (IMITMAWVLSAIFSIPQAVIF) threads the bilayer. At 169 to 199 (QEQRKMFRQGMFHQCRDSYNALWQKQLYSAS) the chain is on the extracellular side. A helical membrane pass occupies residues 200-220 (SLILLFVIPLIIMVTSYLLIL). Topologically, residues 221-268 (KTIVKTSRQFHDTPISPTSMSCYSVNHGQIRTHLFERARKRSSRMSAV) are cytoplasmic. The chain crosses the membrane as a helical span at residues 269-289 (IVAAFILCWTPYYIIFLGFAF). Residues 290-298 (FQWDNSRTV) lie on the Extracellular side of the membrane. Residues 299 to 319 (IYFFTLGTSNCMLNPLIYGAF) traverse the membrane as a helical segment. At 320–407 (TIYKVHRGRS…NGKMPTKPPG (88 aa)) the chain is on the cytoplasmic side. The tract at residues 377 to 407 (SLTNPHQPVRPSPGINSTTSPNGKMPTKPPG) is disordered.

This sequence belongs to the G-protein coupled receptor 1 family. In terms of tissue distribution, widely expressed in peripheral nervous tissue, gonadal tissue and brain. In the brain, expression is high in the palliovisceral lobe and superior buccal lobe but low in the subvertical lobe, superior and inferior frontal lobe, posterior brachial lobe and pedal lobe. Expressed in stomach, rectum, aorta, heart, salivary gland, branchia, pancreas, radula retractor muscle, branchial vessel but not in white body, esophagus, liver and kidney.

The protein localises to the cell membrane. Functionally, receptor for gonadotropin releasing hormone (GnRH) that mediates the action of GnRH to stimulate the secretion of the gonadotropic hormones luteinizing hormone (LH) and follicle-stimulating hormone (FSH). This receptor mediates its action by association with G-proteins that activate a phosphatidylinositol-calcium second messenger system. Ligand interaction triggers steroidogenesis in spermatozoa and follicles. Appears to be involved in contraction of the radula retractor muscle. The polypeptide is Gonadotropin-releasing hormone receptor (Octopus vulgaris (Common octopus)).